A 262-amino-acid polypeptide reads, in one-letter code: Acyl-[acyl-carrier-protein]--UDP-N-acetylglucosamine O-acyltransferase (262 aa).

Belongs to the transferase hexapeptide repeat family. LpxA subfamily. As to quaternary structure, homotrimer.

Its subcellular location is the cytoplasm. It catalyses the reaction a (3R)-hydroxyacyl-[ACP] + UDP-N-acetyl-alpha-D-glucosamine = a UDP-3-O-[(3R)-3-hydroxyacyl]-N-acetyl-alpha-D-glucosamine + holo-[ACP]. It participates in glycolipid biosynthesis; lipid IV(A) biosynthesis; lipid IV(A) from (3R)-3-hydroxytetradecanoyl-[acyl-carrier-protein] and UDP-N-acetyl-alpha-D-glucosamine: step 1/6. Functionally, involved in the biosynthesis of lipid A, a phosphorylated glycolipid that anchors the lipopolysaccharide to the outer membrane of the cell. This chain is Acyl-[acyl-carrier-protein]--UDP-N-acetylglucosamine O-acyltransferase, found in Paraburkholderia phymatum (strain DSM 17167 / CIP 108236 / LMG 21445 / STM815) (Burkholderia phymatum).